A 186-amino-acid polypeptide reads, in one-letter code: Phosphoheptose isomerase (186 aa).

The region spanning Leu-33–Phe-186 is the SIS domain. Asn-48–Gly-50 provides a ligand contact to substrate. 2 residues coordinate Zn(2+): His-57 and Glu-61. Residues Glu-61, Asn-90–Asp-91, Ser-116–Ser-118, Ser-121, and Gln-168 contribute to the substrate site. Zn(2+) is bound by residues Gln-168 and His-176.

This sequence belongs to the SIS family. GmhA subfamily. As to quaternary structure, homotetramer. It depends on Zn(2+) as a cofactor.

The protein localises to the cytoplasm. The catalysed reaction is 2 D-sedoheptulose 7-phosphate = D-glycero-alpha-D-manno-heptose 7-phosphate + D-glycero-beta-D-manno-heptose 7-phosphate. It functions in the pathway carbohydrate biosynthesis; D-glycero-D-manno-heptose 7-phosphate biosynthesis; D-glycero-alpha-D-manno-heptose 7-phosphate and D-glycero-beta-D-manno-heptose 7-phosphate from sedoheptulose 7-phosphate: step 1/1. Its function is as follows. Catalyzes the isomerization of sedoheptulose 7-phosphate in D-glycero-D-manno-heptose 7-phosphate. In Campylobacter jejuni subsp. jejuni serotype O:6 (strain 81116 / NCTC 11828), this protein is Phosphoheptose isomerase.